Reading from the N-terminus, the 170-residue chain is Lipoprotein signal peptidase (170 aa).

3 helical membrane passes run 12–32 (WYWV…WVLS), 67–87 (WQRW…SVWL), and 94–113 (MWRL…GNLI). Residues aspartate 123 and aspartate 141 contribute to the active site. A helical transmembrane segment spans residues 139 to 159 (IADSAICVGAGLIILDSFVAG).

This sequence belongs to the peptidase A8 family.

It localises to the cell inner membrane. The enzyme catalyses Release of signal peptides from bacterial membrane prolipoproteins. Hydrolyzes -Xaa-Yaa-Zaa-|-(S,diacylglyceryl)Cys-, in which Xaa is hydrophobic (preferably Leu), and Yaa (Ala or Ser) and Zaa (Gly or Ala) have small, neutral side chains.. It functions in the pathway protein modification; lipoprotein biosynthesis (signal peptide cleavage). In terms of biological role, this protein specifically catalyzes the removal of signal peptides from prolipoproteins. The protein is Lipoprotein signal peptidase of Shewanella pealeana (strain ATCC 700345 / ANG-SQ1).